Here is a 518-residue protein sequence, read N- to C-terminus: GMP synthase [glutamine-hydrolyzing] (518 aa).

The Glutamine amidotransferase type-1 domain maps to 13–203 (KIIVLDFGSQ…ALNICGCKGD (191 aa)). Cysteine 90 (nucleophile) is an active-site residue. Catalysis depends on residues histidine 177 and glutamate 179. In terms of domain architecture, GMPS ATP-PPase spans 204-393 (WTMENFSEVE…LGMPDAIVWR (190 aa)). 231–237 (SGGVDSS) provides a ligand contact to ATP.

As to quaternary structure, homodimer.

The catalysed reaction is XMP + L-glutamine + ATP + H2O = GMP + L-glutamate + AMP + diphosphate + 2 H(+). It participates in purine metabolism; GMP biosynthesis; GMP from XMP (L-Gln route): step 1/1. Functionally, catalyzes the synthesis of GMP from XMP. The chain is GMP synthase [glutamine-hydrolyzing] from Listeria innocua serovar 6a (strain ATCC BAA-680 / CLIP 11262).